Reading from the N-terminus, the 515-residue chain is Galactose/methyl galactoside import ATP-binding protein MglA (515 aa).

ABC transporter domains follow at residues 8-243 (LEMR…VGRE) and 254-499 (IPKE…AKYL). 40 to 47 (GENGAGKS) contributes to the ATP binding site.

It belongs to the ABC transporter superfamily. Galactose/methyl galactoside importer (TC 3.A.1.2.3) family. The complex is composed of one ATP-binding protein (MglA), two transmembrane proteins (MglC) and a solute-binding protein (MglB).

Its subcellular location is the cell membrane. It catalyses the reaction D-galactose(out) + ATP + H2O = D-galactose(in) + ADP + phosphate + H(+). The enzyme catalyses methyl beta-D-galactoside(out) + ATP + H2O = methyl beta-D-galactoside(in) + ADP + phosphate + H(+). In terms of biological role, part of the ABC transporter complex MglABC involved in galactose/methyl galactoside import. Responsible for energy coupling to the transport system. This chain is Galactose/methyl galactoside import ATP-binding protein MglA, found in Clostridium perfringens (strain SM101 / Type A).